We begin with the raw amino-acid sequence, 39 residues long: QLNFSTGWGRRYADPNADPMAFLTKLIQIEARKLSGCSN.

Gln-1 carries the post-translational modification Pyrrolidone carboxylic acid. Trp-8 bears the Tryptophan amide mark.

This sequence belongs to the AKH/HRTH/RPCH family. As to quaternary structure, adipokinetic hormone precursor-related peptide (APRP) can form three type of disulfide-bond dimers: p1 (alpha-alpha), p2 (alpha-beta), and p3 (beta-beta).

Its subcellular location is the secreted. Its function is as follows. This hormone, released from cells in the corpora cardiaca, causes release of diglycerides from the fat body and stimulation of muscles to use these diglycerides as an energy source during energy-demanding processes. The protein is Adipokinetic prohormone type 2 of Schistocerca gregaria (Desert locust).